Reading from the N-terminus, the 218-residue chain is LexA repressor (218 aa).

Positions 31-51 form a DNA-binding region, H-T-H motif; the sequence is IREIQDGLRISSTSVVAYNLR. Residues serine 137 and lysine 176 each act as for autocatalytic cleavage activity in the active site.

This sequence belongs to the peptidase S24 family. Homodimer.

The catalysed reaction is Hydrolysis of Ala-|-Gly bond in repressor LexA.. Its function is as follows. Represses a number of genes involved in the response to DNA damage (SOS response), including recA and lexA. In the presence of single-stranded DNA, RecA interacts with LexA causing an autocatalytic cleavage which disrupts the DNA-binding part of LexA, leading to derepression of the SOS regulon and eventually DNA repair. The protein is LexA repressor of Roseiflexus sp. (strain RS-1).